An 818-amino-acid polypeptide reads, in one-letter code: ATM interactor (818 aa).

Low complexity predominate over residues 1–34; that stretch reads MAATEAAAADSAGPAPGVPATPASTRGAAAASSP. Positions 1–62 are disordered; it reads MAATEAAAAD…RAAAPVPPAR (62 aa). The C2H2-type 1 zinc-finger motif lies at 80-105; it reads ILCTVRGCGKILPNSPALNMHLVKSH. The C2H2-type 2; degenerate zinc-finger motif lies at 161–181; that stretch reads HKCSKCSNSYGTEWDLKRHEE. The span at 210–221 shows a compositional bias: basic and acidic residues; it reads HEIPAEHRDPPS. Disordered regions lie at residues 210–284 and 603–625; these read HEIP…ATPP and DNRSLLSDTNPGPDAQLPAGSAQ. Residues 219–437 form a required for formation of RAD51 foci region; sequence PPSKKRKMES…PDSSVSSCSQ (219 aa). 2 stretches are compositionally biased toward polar residues: residues 229–243 and 603–612; these read YLQNQKLSSKTTEPL and DNRSLLSDTN.

In terms of assembly, interacts via its C-terminus with ATM. Interacts with DYNLL; this interaction inhibits ATMIN transcriptional activity and hence may play a role in a feedback loop whereby DYNLL1 inhibits transactivation of its own promoter by ATMIN. ATMIN.

The protein resides in the nucleus. Its function is as follows. Transcription factor. Plays a crucial role in cell survival and RAD51 foci formation in response to methylating DNA damage. Involved in regulating the activity of ATM in the absence of DNA damage. May play a role in stabilizing ATM. Binds to the DYNLL1 promoter and activates its transcription. This Mus musculus (Mouse) protein is ATM interactor.